We begin with the raw amino-acid sequence, 591 residues long: L-fucose isomerase (591 aa).

Catalysis depends on proton acceptor residues Glu-338 and Asp-362. Positions 338, 362, and 529 each coordinate Mn(2+).

This sequence belongs to the L-fucose isomerase family. Mn(2+) serves as cofactor.

The protein localises to the cytoplasm. The enzyme catalyses L-fucose = L-fuculose. The protein operates within carbohydrate degradation; L-fucose degradation; L-lactaldehyde and glycerone phosphate from L-fucose: step 1/3. Functionally, converts the aldose L-fucose into the corresponding ketose L-fuculose. The sequence is that of L-fucose isomerase from Bacteroides thetaiotaomicron (strain ATCC 29148 / DSM 2079 / JCM 5827 / CCUG 10774 / NCTC 10582 / VPI-5482 / E50).